Reading from the N-terminus, the 74-residue chain is Psi-conotoxin PrIIIE (74 aa).

The N-terminal stretch at 1 to 19 (MSKLGVLLTICLLLFPITA) is a signal peptide. Residues 20-50 (LPVDGDQPADRPVERMQDNISSEQHPFFEKR) constitute a propeptide that is removed on maturation. Disulfide bonds link cysteine 54/cysteine 66, cysteine 55/cysteine 71, and cysteine 61/cysteine 72. The residue at position 72 (cysteine 72) is a Cysteine amide.

It belongs to the conotoxin M superfamily. As to expression, expressed by the venom duct.

Its subcellular location is the secreted. In terms of biological role, psi-conotoxins act on postsynaptic membranes, and act as non-competitive antagonist of nicotinic acetylcholine receptors (nAChR). Reversibly inhibits both adult- and fetal-types nAChR. The inhibition potency against the adult- (alpha-1/beta-1/epsilon/delta) is higher than against the fetal-type (alpha-1/beta-1/gamma/delta). Induces flaccid paralysis in goldfish, but does not induce any remarkable behavior in mice and does not block action potential in directly stimulated frog muscle preparations. This Conus parius (Cone snail) protein is Psi-conotoxin PrIIIE.